An 809-amino-acid polypeptide reads, in one-letter code: 3',5'-cyclic-AMP phosphodiesterase 4D (809 aa).

The tract at residues 1–107 is disordered; that stretch reads MEAEGSSAPA…SGATGRVRHR (107 aa). Phosphoserine is present on residues His-54, Pro-59, and Pro-63. The span at 58–89 shows a compositional bias: pro residues; sequence PPPPPPSPQPQPQCPLQPPPPPPLPPPPPPPG. Positions 90–102 are enriched in low complexity; that stretch reads AARGRYASSGATG. A phosphoserine mark is found at Ser-142, Ser-299, Ser-301, Ser-348, and Ser-375. The interval 343 to 364 is disordered; that stretch reads EVEIPSPTQKEKEKKKRPMSQI. Positions 386–715 constitute a PDEase domain; the sequence is VKTEQEDVLA…EWYQSTIPQS (330 aa). Lys-387 participates in a covalent cross-link: Glycyl lysine isopeptide (Lys-Gly) (interchain with G-Cter in SUMO). The active-site Proton donor is His-462. Residue His-462 coordinates 3',5'-cyclic AMP. His-462 contacts AMP. Zn(2+) contacts are provided by His-466, His-502, Asp-503, and Asp-620. Residues Asp-503, Asp-620, Asn-623, Gln-671, and Phe-674 each contribute to the AMP site. Position 503 (Asp-503) interacts with Mg(2+). Residue Asp-503 participates in Mn(2+) binding. 2 residues coordinate 3',5'-cyclic AMP: Gln-671 and Phe-674. Disordered regions lie at residues 710 to 729 and 739 to 809; these read STIP…GRQG and TLEE…SPDT. The span at 762-773 shows a compositional bias: polar residues; the sequence is CSDSKTLCTQDS. Acidic residues predominate over residues 779–796; that stretch reads PLDEQVEEEAVGEEEESQ.

The protein belongs to the cyclic nucleotide phosphodiesterase family. PDE4 subfamily. Homodimer for the long isoforms. Isoforms with truncated N-termini are monomeric. Isoform 3 is part of a ternary complex containing PRKAR2A, PRKAR2B and AKAP9. Interacts with PDE4DIP. Identified in a complex composed of RYR1, PDE4D, PKA, FKBP1A and protein phosphatase 1 (PP1). Isoform 5, isoform N3 and isoform 12 bind RACK1 via their unique N-terminus. Binds ARRB2. Interacts (via N-terminal region) with SHANK2 (via proline-rich region); the interaction is increased in a PKA-dependent manner. Requires Zn(2+) as cofactor. Mg(2+) is required as a cofactor. Mn(2+) serves as cofactor. In terms of processing, long isoforms that share a conserved PKA phosphorylation site in the N-terminus are activated by PKA through phosphorylation. Isoform 3 and isoform 7 are activated by phosphorylation (in vitro), but not isoform 6. Isoform N3 and isoform 12 are phosphorylated on Ser-49, Ser-51, Ser-55 and Ser-59. Post-translationally, sumoylation of long isoforms by PIAS4 augments their activation by PKA phosphorylation and represses their inhibition by ERK phosphorylation. Expressed in colonic epithelial cells (at protein level). Widespread; most abundant in skeletal muscle. As to expression, detected in brain. In terms of tissue distribution, detected in brain, placenta, lung and kidney. Detected in heart and skeletal muscle.

It is found in the apical cell membrane. The protein resides in the cytoplasm. It localises to the membrane. Its subcellular location is the cytoskeleton. The protein localises to the microtubule organizing center. It is found in the centrosome. It catalyses the reaction 3',5'-cyclic AMP + H2O = AMP + H(+). It functions in the pathway purine metabolism; 3',5'-cyclic AMP degradation; AMP from 3',5'-cyclic AMP: step 1/1. Its activity is regulated as follows. Inhibited by rolipram. Activated by phosphatidic acid. In terms of biological role, hydrolyzes the second messenger cAMP, which is a key regulator of many important physiological processes. The chain is 3',5'-cyclic-AMP phosphodiesterase 4D from Homo sapiens (Human).